A 63-amino-acid polypeptide reads, in one-letter code: Sperm protamine P1 (63 aa).

Positions 1–63 (MARYRRHSRS…RYSRRGRRRY (63 aa)) are disordered.

Belongs to the protamine P1 family. Testis.

Its subcellular location is the nucleus. The protein localises to the chromosome. Functionally, protamines substitute for histones in the chromatin of sperm during the haploid phase of spermatogenesis. They compact sperm DNA into a highly condensed, stable and inactive complex. The protein is Sperm protamine P1 (PRM1) of Phascogale tapoatafa (Common wambenger).